The sequence spans 1793 residues: Non-reducing polyketide synthase adaA (1793 aa).

Residues 16 to 250 (NDDLKALFRG…YSKSLALPVY (235 aa)) form an N-terminal acylcarrier protein transacylase domain (SAT) region. A Ketosynthase family 3 (KS3) domain is found at 388-821 (DSKLAIVGMA…GGNTTLVLED (434 aa)). Active-site for beta-ketoacyl synthase activity residues include cysteine 561, histidine 696, and histidine 739. The segment at 923–1245 (VFTFTGQGAY…KSLCTLHLAG (323 aa)) is malonyl-CoA:ACP transacylase (MAT) domain. Residues 1312–1634 (TSLIHQVTEE…RLLMDRFFSP (323 aa)) form a product template (PT) domain region. The N-terminal hotdog fold stretch occupies residues 1316 to 1452 (HQVTEETVDK…GSIKYPADPT (137 aa)). The 314-residue stretch at 1316-1629 (HQVTEETVDK…FRRVPRLLMD (314 aa)) folds into the PKS/mFAS DH domain. Residue histidine 1348 is the Proton acceptor; for dehydratase activity of the active site. Residues 1482 to 1629 (KASTLSKPLA…FRRVPRLLMD (148 aa)) form a C-terminal hotdog fold region. Aspartate 1540 functions as the Proton donor; for dehydratase activity in the catalytic mechanism. Positions 1642–1659 (AAPAPAPAAVPAVKKQPP) are enriched in low complexity. Residues 1642–1714 (AAPAPAPAAV…TTEQEAPVAD (73 aa)) are disordered. Over residues 1660 to 1681 (TETIQPQAPKTEQKQDQLQLPN) the composition is skewed to polar residues. Over residues 1683-1706 (ASAAPSTANSSSSPSSSGVATPTT) the composition is skewed to low complexity. One can recognise a Carrier domain in the interval 1716–1793 (SAVTGVAGKC…DLTGWLEQYC (78 aa)). Serine 1753 is subject to O-(pantetheine 4'-phosphoryl)serine.

Pantetheine 4'-phosphate is required as a cofactor.

The enzyme catalyses holo-[ACP] + 9 malonyl-CoA + acetyl-CoA + 9 H(+) = 3-(2,4-dioxopentyl)-3,6,8,9-tetrahydroxy-1-oxo-1,2,3,4-tetrahydroanthracene-2-carboxyl-[ACP] + 9 CO2 + 10 CoA + 2 H2O. It participates in secondary metabolite biosynthesis. Non-reducing polyketide synthase; part of the gene cluster that mediates the biosynthesis of the linear tetracyclic TAN-1612 neuropeptide Y receptor antagonist. The decaketide backbone of TAN-1612 is synthesized by the non-reducing polyketide synthase adaA via condensation of one acetyl-CoA starter unit with 9 malonyl-CoA units. The FAD-dependent monooxygenase adaC then performs hydroxylation at C2 while the polaketide chain is still attached to the NRPKS adaA. The alpha-hydroxylation step at C2 appears to be crucial for the following C18-C1 Claisen cyclization and release of the C9-hydroxyl version of TAN-1612 from the NRPKS adaA, two steps performed by the lactamase-like protein adaB. Finally, the O-methyltransferase adaD performs the C9 O-methylation to complete the biosynthesis of TAN-1612. This Aspergillus niger (strain ATCC MYA-4892 / CBS 513.88 / FGSC A1513) protein is Non-reducing polyketide synthase adaA.